The chain runs to 229 residues: C-&gt;U-editing enzyme APOBEC-1 (229 aa).

The region spanning 10 to 134 (VDPTLRRRIE…QRNRQGLRDL (125 aa)) is the CMP/dCMP-type deaminase domain. A Zn(2+)-binding site is contributed by H61. E63 functions as the Proton donor in the catalytic mechanism. Residues C93 and C96 each contribute to the Zn(2+) site.

It belongs to the cytidine and deoxycytidylate deaminase family. In terms of assembly, homodimer. Interacts with A1CF; form an mRNA editing complex. Interacts with RBM47; form an mRNA editing complex. Found in a complex with CELF2/CUGBP2 and A1CF. Interacts with HNRPAB. Interacts with SYNCRIP. Requires Zn(2+) as cofactor. Expressed in the spleen. Expressed at lower level in the kidney, testis, lung, brain and liver.

It is found in the cytoplasm. The protein resides in the nucleus. The enzyme catalyses a cytidine in mRNA + H2O + H(+) = a uridine in mRNA + NH4(+). It catalyses the reaction cytidine(6666) in apoB mRNA + H2O + H(+) = uridine(6666) in apoB mRNA + NH4(+). Functionally, cytidine deaminase catalyzing the cytidine to uridine postranscriptional editing of a variety of mRNAs. Form complexes with cofactors that confer differential editing activity and selectivity. Responsible for the postranscriptional editing of a CAA codon for Gln to a UAA codon for stop in the apolipoprotein B mRNA. Also involved in CGA (Arg) to UGA (Stop) editing in the NF1 mRNA. May also play a role in the epigenetic regulation of gene expression by participating in DNA demethylation. This is C-&gt;U-editing enzyme APOBEC-1 from Mus musculus (Mouse).